A 55-amino-acid polypeptide reads, in one-letter code: ATP synthase F(0) complex subunit 8 (55 aa).

Residues 10 to 32 traverse the membrane as a helical segment; it reads FFTMLTTWLTFLLLIQPKLLSFI.

This sequence belongs to the ATPase protein 8 family. As to quaternary structure, component of the ATP synthase complex composed at least of ATP5F1A/subunit alpha, ATP5F1B/subunit beta, ATP5MC1/subunit c (homooctomer), MT-ATP6/subunit a, MT-ATP8/subunit 8, ATP5ME/subunit e, ATP5MF/subunit f, ATP5MG/subunit g, ATP5MK/subunit k, ATP5MJ/subunit j, ATP5F1C/subunit gamma, ATP5F1D/subunit delta, ATP5F1E/subunit epsilon, ATP5PF/subunit F6, ATP5PB/subunit b, ATP5PD/subunit d, ATP5PO/subunit OSCP. ATP synthase complex consists of a soluble F(1) head domain (subunits alpha(3) and beta(3)) - the catalytic core - and a membrane F(0) domain - the membrane proton channel (subunits c, a, 8, e, f, g, k and j). These two domains are linked by a central stalk (subunits gamma, delta, and epsilon) rotating inside the F1 region and a stationary peripheral stalk (subunits F6, b, d, and OSCP).

Its subcellular location is the mitochondrion membrane. In terms of biological role, subunit 8, of the mitochondrial membrane ATP synthase complex (F(1)F(0) ATP synthase or Complex V) that produces ATP from ADP in the presence of a proton gradient across the membrane which is generated by electron transport complexes of the respiratory chain. ATP synthase complex consist of a soluble F(1) head domain - the catalytic core - and a membrane F(1) domain - the membrane proton channel. These two domains are linked by a central stalk rotating inside the F(1) region and a stationary peripheral stalk. During catalysis, ATP synthesis in the catalytic domain of F(1) is coupled via a rotary mechanism of the central stalk subunits to proton translocation. In vivo, can only synthesize ATP although its ATP hydrolase activity can be activated artificially in vitro. Part of the complex F(0) domain. The polypeptide is ATP synthase F(0) complex subunit 8 (Guira guira (Guira cuckoo)).